Reading from the N-terminus, the 245-residue chain is Enolase-phosphatase E1 (245 aa).

Residues Asp14 and Glu16 each contribute to the Mg(2+) site. Residues 141–142 and Lys175 each bind substrate; that span reads SS. Asp200 provides a ligand contact to Mg(2+).

It belongs to the HAD-like hydrolase superfamily. MasA/MtnC family. As to quaternary structure, monomer. Mg(2+) serves as cofactor.

It localises to the cytoplasm. The protein localises to the nucleus. It catalyses the reaction 5-methylsulfanyl-2,3-dioxopentyl phosphate + H2O = 1,2-dihydroxy-5-(methylsulfanyl)pent-1-en-3-one + phosphate. It functions in the pathway amino-acid biosynthesis; L-methionine biosynthesis via salvage pathway; L-methionine from S-methyl-5-thio-alpha-D-ribose 1-phosphate: step 3/6. It participates in amino-acid biosynthesis; L-methionine biosynthesis via salvage pathway; L-methionine from S-methyl-5-thio-alpha-D-ribose 1-phosphate: step 4/6. Bifunctional enzyme that catalyzes the enolization of 2,3-diketo-5-methylthiopentyl-1-phosphate (DK-MTP-1-P) into the intermediate 2-hydroxy-3-keto-5-methylthiopentenyl-1-phosphate (HK-MTPenyl-1-P), which is then dephosphorylated to form the acireductone 1,2-dihydroxy-3-keto-5-methylthiopentene (DHK-MTPene). This is Enolase-phosphatase E1 from Drosophila grimshawi (Hawaiian fruit fly).